The following is a 539-amino-acid chain: Capsid protein VP1 (539 aa).

The segment at 1–221 (MKMASNDANP…FIFLVPPTVE (221 aa)) is shell domain. The interval 222–274 (SRTKPFTVPVLTVEEMSNSRFPIPLEKLYTGPSSAFVVQPQNGRCTTDGVLLG) is P1 sub-domain 1. The protruding domain stretch occupies residues 222-539 (SRTKPFTVPV…GNGTGRRRAL (318 aa)). Residues 275 to 417 (TTQLSAVNIC…SGRTGHNVHL (143 aa)) form a P2 sub-domain region. Positions 418-539 (APAVAPTFPG…GNGTGRRRAL (122 aa)) are P1 sub-domain 2.

The protein belongs to the caliciviridae capsid protein family. Homodimer. Homomultimer. Interacts with the minor capsid protein VP2. Interacts (via C-terminus) with host type I histo-blood group structures antigens at the surface of target cells. Post-translationally, may be cleaved by host protease to generate soluble capsid protein. Assembled capsid cannot be cleaved.

The protein resides in the virion. It is found in the host cytoplasm. Functionally, capsid protein self assembles to form an icosahedral capsid with a T=3 symmetry, about 38 nm in diameter, and consisting of 180 capsid proteins. A smaller form of capsid with a diameter of 23 nm might be capsid proteins assembled as icosahedron with T=1 symmetry. The capsid encapsulates the genomic RNA and is decorated with VP2 proteins. Attaches virion to target cells by binding histo-blood group antigens (HBGAs) present on gastroduodenal epithelial cells. The soluble capsid protein may play a role in viral immunoevasion. The polypeptide is Capsid protein VP1 (Homo sapiens (Human)).